Consider the following 267-residue polypeptide: tRNA pseudouridine synthase A (267 aa).

Asp-55 acts as the Nucleophile in catalysis. Tyr-111 lines the substrate pocket.

It belongs to the tRNA pseudouridine synthase TruA family.

It catalyses the reaction uridine(38/39/40) in tRNA = pseudouridine(38/39/40) in tRNA. Functionally, formation of pseudouridine at positions 38, 39 and 40 in the anticodon stem and loop of transfer RNAs. The sequence is that of tRNA pseudouridine synthase A from Thermococcus kodakarensis (strain ATCC BAA-918 / JCM 12380 / KOD1) (Pyrococcus kodakaraensis (strain KOD1)).